Consider the following 105-residue polypeptide: Met repressor (105 aa).

The protein belongs to the MetJ family. In terms of assembly, homodimer.

It is found in the cytoplasm. In terms of biological role, this regulatory protein, when combined with SAM (S-adenosylmethionine) represses the expression of the methionine regulon and of enzymes involved in SAM synthesis. The protein is Met repressor of Haemophilus influenzae (strain PittEE).